A 353-amino-acid chain; its full sequence is Aliphatic aldoxime dehydratase (353 aa).

Position 219 (Ser-219) interacts with an aliphatic aldoxime. Position 299 (His-299) interacts with heme b. Residue His-320 coordinates an aliphatic aldoxime. Residue His-320 is part of the active site.

This sequence belongs to the heme-containing dehydratase family. Homodimer. Requires heme b as cofactor.

It catalyses the reaction an aliphatic aldoxime = a nitrile + H2O. Active when the heme iron is in the ferrous state. The activity is enhanced by reducing agents, such as Na(2)S, Na(2)S(2)(O4), 2-mercaptoethanol, and L-cysteine and supplementary additions of electron acceptors such as flavins, sulfite ion, and vitamin K3. The effect of various chemicals on the enzyme activity is different in the presence and absence of the reducing reagent, Na(2)S, which acts not only as a reductant but also changes the substrate specificity of the enzyme. Catalyzes the dehydration of aldoximes to their corresponding nitrile. Is active toward various arylalkyl- and alkyl-aldoximes, and to a lesser extent toward aryl-aldoximes. This is Aliphatic aldoxime dehydratase from Rhodococcus erythropolis (Arthrobacter picolinophilus).